Here is a 501-residue protein sequence, read N- to C-terminus: E3 ubiquitin-protein ligase TRIM35 (501 aa).

The residue at position 1 (Met1) is an N-acetylmethionine. Ser8 carries the post-translational modification Phosphoserine. Residues Cys21–Lys61 form an RING-type zinc finger. A B box-type zinc finger spans residues Arg96–Ile137. Zn(2+) contacts are provided by Cys101, His104, Cys123, and His129. The stretch at Val200–Phe252 forms a coiled coil. The region spanning Leu284–Ile495 is the B30.2/SPRY domain.

The protein belongs to the TRIM/RBCC family. As to quaternary structure, interacts with PKM isoform M2, but not isoform M1; this interaction may compete with that between PKM and FGFR1, and hence reduces FGFR1-dependent tyrosine phosphorylation of PKM. Interacts with IRF7; this interaction promotes IRF7 proteasomal degradation. Interacts with TRAF3; this interaction promotes TRAF3 activation. Widely expressed. Highly expressed in brain, heart, kidney, spleen, skeletal muscle, lung and thymus. Lower expression found in stomach, large intestine and bone marrow.

The protein resides in the cytoplasm. The protein localises to the nucleus. It carries out the reaction S-ubiquitinyl-[E2 ubiquitin-conjugating enzyme]-L-cysteine + [acceptor protein]-L-lysine = [E2 ubiquitin-conjugating enzyme]-L-cysteine + N(6)-ubiquitinyl-[acceptor protein]-L-lysine.. It participates in protein modification; protein ubiquitination. Functionally, E3 ubiquitin-protein ligase that participates in multiple biological processes including cell death, glucose metabolism, and in particular, the innate immune response. Mediates 'Lys-63'-linked polyubiquitination of TRAF3 thereby promoting type I interferon production via RIG-I signaling pathway. Can also catalyze 'Lys-48'-linked polyubiquitination and proteasomal degradation of viral proteins such as influenza virus PB2. Acts as a negative feedback regulator of TLR7- and TLR9-triggered signaling. Mechanistically, promotes the 'Lys-48'-linked ubiquitination of IRF7 and induces its degradation via a proteasome-dependent pathway. Reduces FGFR1-dependent tyrosine phosphorylation of PKM, inhibiting PKM-dependent lactate production, glucose metabolism, and cell growth. This is E3 ubiquitin-protein ligase TRIM35 (Trim35) from Mus musculus (Mouse).